The following is a 343-amino-acid chain: MAQYKGAASEAGRAMQLMKKREKQREQLEQMKLKIAEENVVKANINKKFSAHYDAVEAELKSSTVGLVTLNDMKAKQEALVKEREKQLAKKEQFKDLQLKLEKQRERERKKEQKRKIASLSFNLEEDEECEDEESEEEEEEYVADKEDLPKKKKKKKQQLGKNPDVDTSFLPDRDREEEENRLREELRQEWERKQEKIKSEEIEITFSYWDGSGHRRTVKMKKGNSIQQFLQKALEILRKDFSELRSAGVEQLMYIKEDLIIPHHHSFYDFIVTKARGKSGPLFNFDVHEDVRLLSDASVEKDESHAGKVVLRSWYEKNKHIFPASRWEPYDPEKKWDKYTIR.

Disordered regions lie at residues 1-25 and 125-181; these read MAQY…EKQR and EEDE…EEEN. Acidic residues predominate over residues 125–142; that stretch reads EEDEECEDEESEEEEEEY. Residues 172-181 show a composition bias toward basic and acidic residues; it reads PDRDREEEEN.

The protein belongs to the FAM50 family.

Its subcellular location is the nucleus. In terms of biological role, probably involved in the regulation of pre-mRNA splicing. This chain is Protein FAM50A-B (fam50a-b), found in Xenopus laevis (African clawed frog).